The primary structure comprises 2029 residues: Tyrosine-protein phosphatase Lar (2029 aa).

Residues 1-32 (MGLQMTAARPIAALSLLVLSLLTWTHPTIVDA) form the signal peptide. Residues 33–1377 (AHPPEIIRKP…SVNRNKDEPE (1345 aa)) lie on the Extracellular side of the membrane. Ig-like C2-type domains are found at residues 36–128 (PEII…ATLT), 140–224 (PVIT…KATN), and 234–316 (PTFS…VSVV). Disulfide bonds link cysteine 57–cysteine 111 and cysteine 161–cysteine 209. Residue 70–82 (RKNGKKVSGTQSR) coordinates heparin. 3 N-linked (GlcNAc...) asparagine glycosylation sites follow: asparagine 176, asparagine 253, and asparagine 298. A disulfide bond links cysteine 256 and cysteine 301. 9 Fibronectin type-III domains span residues 324–414 (APTD…TGET), 419–513 (APRN…AQQG), 517–608 (QPSN…TKQY), 613–707 (PPRN…TQED), 711–810 (DPQD…TPGG), 815–911 (PTVS…TPGG), 912–1005 (PPSN…TERD), 1009–1102 (APMS…IKPE), and 1104–1206 (VPLN…TQMA). N-linked (GlcNAc...) asparagine glycosylation is found at asparagine 553, asparagine 616, asparagine 666, asparagine 721, and asparagine 774. 2 N-linked (GlcNAc...) asparagine glycosylation sites follow: asparagine 915 and asparagine 962. Asparagine 1183 and asparagine 1304 each carry an N-linked (GlcNAc...) asparagine glycan. The span at 1346-1358 (REAPPGERPHRPD) shows a compositional bias: basic and acidic residues. The disordered stretch occupies residues 1346–1369 (REAPPGERPHRPDPNWPAEPEVSV). The chain crosses the membrane as a helical span at residues 1378–1402 (ILWVVLPLMVSTFIVSTALIVLCVV). Residues 1403 to 2029 (KRRRQPCKTP…YLGSFDNYTN (627 aa)) lie on the Cytoplasmic side of the membrane. 2 Tyrosine-protein phosphatase domains span residues 1474–1729 (FSQE…ILEA) and 1761–2020 (MEVE…ALEY). Residue threonine 1572 is modified to Phosphothreonine. Residues aspartate 1638, 1670–1676 (CSAGVGR), and glutamine 1714 each bind substrate. Cysteine 1670 acts as the Phosphocysteine intermediate in catalysis. Cysteine 1961 functions as the Phosphocysteine intermediate in the catalytic mechanism.

It belongs to the protein-tyrosine phosphatase family. Receptor class 2A subfamily. In terms of tissue distribution, selectively expressed in a subset of axons and pioneer neurons in the embryo.

Its subcellular location is the membrane. It carries out the reaction O-phospho-L-tyrosyl-[protein] + H2O = L-tyrosyl-[protein] + phosphate. In terms of biological role, possible cell adhesion receptor. It possesses an intrinsic protein tyrosine phosphatase activity (PTPase). It controls motor axon guidance. In the developing eye, has a role in normal axonal targeting of the R7 photoreceptor, where it negatively regulates bdl. Inhibits bdl cell adhesion activity in vitro; this effect is independent of its PTPase function. This Drosophila melanogaster (Fruit fly) protein is Tyrosine-protein phosphatase Lar (Lar).